A 373-amino-acid chain; its full sequence is tRNA-specific 2-thiouridylase MnmA (373 aa).

ATP contacts are provided by residues 12–19 and M38; that span reads GMSGGVDS. The tract at residues 98-100 is interaction with target base in tRNA; sequence NPD. C103 functions as the Nucleophile in the catalytic mechanism. An intrachain disulfide couples C103 to C200. G127 contacts ATP. The interval 150–152 is interaction with tRNA; the sequence is KDQ. C200 serves as the catalytic Cysteine persulfide intermediate. The tract at residues 312–313 is interaction with tRNA; sequence RY.

Belongs to the MnmA/TRMU family.

It localises to the cytoplasm. It catalyses the reaction S-sulfanyl-L-cysteinyl-[protein] + uridine(34) in tRNA + AH2 + ATP = 2-thiouridine(34) in tRNA + L-cysteinyl-[protein] + A + AMP + diphosphate + H(+). Its function is as follows. Catalyzes the 2-thiolation of uridine at the wobble position (U34) of tRNA, leading to the formation of s(2)U34. The protein is tRNA-specific 2-thiouridylase MnmA of Streptococcus pyogenes serotype M2 (strain MGAS10270).